An 875-amino-acid polypeptide reads, in one-letter code: Alanine--tRNA ligase (875 aa).

A disordered region spans residues 426–445 (ERSRKNTVKNKNDSDSIFQD). The Zn(2+) site is built by histidine 561, histidine 565, cysteine 663, and histidine 667.

The protein belongs to the class-II aminoacyl-tRNA synthetase family. It depends on Zn(2+) as a cofactor.

It is found in the cytoplasm. It catalyses the reaction tRNA(Ala) + L-alanine + ATP = L-alanyl-tRNA(Ala) + AMP + diphosphate. In terms of biological role, catalyzes the attachment of alanine to tRNA(Ala) in a two-step reaction: alanine is first activated by ATP to form Ala-AMP and then transferred to the acceptor end of tRNA(Ala). Also edits incorrectly charged Ser-tRNA(Ala) and Gly-tRNA(Ala) via its editing domain. The polypeptide is Alanine--tRNA ligase (Chlamydia muridarum (strain MoPn / Nigg)).